The chain runs to 177 residues: Large ribosomal subunit protein uL6 (177 aa).

It belongs to the universal ribosomal protein uL6 family. As to quaternary structure, part of the 50S ribosomal subunit.

Its function is as follows. This protein binds to the 23S rRNA, and is important in its secondary structure. It is located near the subunit interface in the base of the L7/L12 stalk, and near the tRNA binding site of the peptidyltransferase center. This is Large ribosomal subunit protein uL6 from Rhodopseudomonas palustris (strain BisB5).